We begin with the raw amino-acid sequence, 244 residues long: rRNA adenine N-6-methyltransferase (244 aa).

6 residues coordinate S-adenosyl-L-methionine: asparagine 11, isoleucine 13, glycine 38, glutamate 59, aspartate 84, and asparagine 101.

The protein belongs to the class I-like SAM-binding methyltransferase superfamily. rRNA adenine N(6)-methyltransferase family.

It catalyses the reaction adenosine(2085) in 23S rRNA + 2 S-adenosyl-L-methionine = N(6)-dimethyladenosine(2085) in 23S rRNA + 2 S-adenosyl-L-homocysteine + 2 H(+). Its function is as follows. This protein produces a dimethylation of the adenine residue at position 2085 in 23S rRNA, resulting in reduced affinity between ribosomes and macrolide-lincosamide-streptogramin B antibiotics. The protein is rRNA adenine N-6-methyltransferase (ermC') of Bacillus subtilis.